The sequence spans 669 residues: uncharacterized protein (669 aa).

A run of 12 helical transmembrane segments spans residues 9–29 (PLVI…IFIA), 48–68 (FSWF…ILSV), 87–107 (FLSW…MFFG), 139–159 (WGIH…YFGF), 186–206 (AIDV…LGFG), 224–244 (SFAL…FSAI), 259–279 (LTLA…LYLL), 314–334 (WTVL…LFIA), 345–365 (FIFG…TVFG), 397–417 (YLPL…LFFI), 444–464 (AIMW…SGGL), and 470–490 (MTLI…FSLW).

The protein belongs to the BCCT transporter (TC 2.A.15) family.

It is found in the cell inner membrane. This is an uncharacterized protein from Haemophilus influenzae (strain ATCC 51907 / DSM 11121 / KW20 / Rd).